Consider the following 1405-residue polypeptide: DNA-directed RNA polymerase subunit beta' (1405 aa).

Zn(2+) is bound by residues cysteine 70, cysteine 72, cysteine 85, and cysteine 88. Mg(2+) contacts are provided by aspartate 460, aspartate 462, and aspartate 464. 4 residues coordinate Zn(2+): cysteine 814, cysteine 888, cysteine 895, and cysteine 898.

It belongs to the RNA polymerase beta' chain family. As to quaternary structure, the RNAP catalytic core consists of 2 alpha, 1 beta, 1 beta' and 1 omega subunit. When a sigma factor is associated with the core the holoenzyme is formed, which can initiate transcription. The cofactor is Mg(2+). It depends on Zn(2+) as a cofactor.

The catalysed reaction is RNA(n) + a ribonucleoside 5'-triphosphate = RNA(n+1) + diphosphate. Functionally, DNA-dependent RNA polymerase catalyzes the transcription of DNA into RNA using the four ribonucleoside triphosphates as substrates. The protein is DNA-directed RNA polymerase subunit beta' of Shewanella sediminis (strain HAW-EB3).